The following is a 347-amino-acid chain: Phenylalanine--tRNA ligase alpha subunit (347 aa).

E261 provides a ligand contact to Mg(2+).

The protein belongs to the class-II aminoacyl-tRNA synthetase family. Phe-tRNA synthetase alpha subunit type 1 subfamily. As to quaternary structure, tetramer of two alpha and two beta subunits. It depends on Mg(2+) as a cofactor.

The protein resides in the cytoplasm. It catalyses the reaction tRNA(Phe) + L-phenylalanine + ATP = L-phenylalanyl-tRNA(Phe) + AMP + diphosphate + H(+). The polypeptide is Phenylalanine--tRNA ligase alpha subunit (Streptococcus pyogenes serotype M3 (strain ATCC BAA-595 / MGAS315)).